A 204-amino-acid chain; its full sequence is Peptidyl-tRNA hydrolase (204 aa).

Tyr14 serves as a coordination point for tRNA. The active-site Proton acceptor is His19. Tyr64, Asn66, and Asn112 together coordinate tRNA.

It belongs to the PTH family. Monomer.

The protein resides in the cytoplasm. The catalysed reaction is an N-acyl-L-alpha-aminoacyl-tRNA + H2O = an N-acyl-L-amino acid + a tRNA + H(+). Hydrolyzes ribosome-free peptidyl-tRNAs (with 1 or more amino acids incorporated), which drop off the ribosome during protein synthesis, or as a result of ribosome stalling. Functionally, catalyzes the release of premature peptidyl moieties from peptidyl-tRNA molecules trapped in stalled 50S ribosomal subunits, and thus maintains levels of free tRNAs and 50S ribosomes. The chain is Peptidyl-tRNA hydrolase from Nitrobacter hamburgensis (strain DSM 10229 / NCIMB 13809 / X14).